A 299-amino-acid chain; its full sequence is Ornithine carbamoyltransferase (299 aa).

Carbamoyl phosphate is bound by residues 52-55 (STRT), Q79, R103, and 130-133 (HPCQ). Residues N161, D218, and 222-223 (SM) contribute to the L-ornithine site. Residues 258–259 (CL) and R286 contribute to the carbamoyl phosphate site.

This sequence belongs to the aspartate/ornithine carbamoyltransferase superfamily. OTCase family.

The protein resides in the cytoplasm. It catalyses the reaction carbamoyl phosphate + L-ornithine = L-citrulline + phosphate + H(+). It participates in amino-acid biosynthesis; L-arginine biosynthesis; L-arginine from L-ornithine and carbamoyl phosphate: step 1/3. Reversibly catalyzes the transfer of the carbamoyl group from carbamoyl phosphate (CP) to the N(epsilon) atom of ornithine (ORN) to produce L-citrulline. This Ruthia magnifica subsp. Calyptogena magnifica protein is Ornithine carbamoyltransferase.